A 682-amino-acid chain; its full sequence is Nephrocystin-1-like protein (682 aa).

Positions 10–100 form a coiled coil; it reads LQDAINRFPQ…ALSPEKEQLS (91 aa). The tract at residues 96-188 is disordered; that stretch reads KEQLSFSVSV…PLESKTLNER (93 aa). Over residues 128-148 the composition is skewed to acidic residues; the sequence is NDDESEDSDNDSEIIETDVQL. The SH3 domain maps to 215 to 275; sequence VRGNVFVAID…PKTYLQHVKE (61 aa).

It belongs to the nephrocystin-1 family. In terms of tissue distribution, expressed in ciliated sensory neurons of the head (amphid neurons) and the tail in hermaphrodites (phasmid neurons) and males (sensory ray neurons).

Its function is as follows. Plays a role in the extension of dendrites from phasmid ciliated sensory neurons. May be necessary for initial assembly of the cilium. The protein is Nephrocystin-1-like protein of Caenorhabditis elegans.